The following is a 1727-amino-acid chain: Nucleoporin alm1 (1727 aa).

Coiled coils occupy residues 57 to 361 (QEVN…KNTS), 443 to 463 (NFLSESLETSNNNLTKVQAEL), 542 to 740 (IKEA…AEEL), 804 to 1106 (AARK…INES), 1223 to 1427 (GERS…QLNK), 1497 to 1555 (NEEE…AESA), and 1601 to 1664 (QKEW…KKDS). The span at 1423–1448 (EQLNKPSATPTATTQSEPSTVSLEEF) shows a compositional bias: polar residues. Disordered regions lie at residues 1423–1459 (EQLNKPSATPTATTQSEPSTVSLEEFNSTKEELSSTQ), 1477–1500 (EKVRQNSNKSEGTSKDTEIPNEEE), and 1656–1727 (LEQS…KKAK). 2 stretches are compositionally biased toward polar residues: residues 1672 to 1684 (ASKNTDSNKSNSE) and 1702 to 1714 (VDTNSPPKRSSSD). The residue at position 1706 (serine 1706) is a Phosphoserine.

The protein resides in the nucleus. Its subcellular location is the nuclear pore complex. The protein localises to the nucleus envelope. Its function is as follows. Maintains the proteasome and its anchor cut8 at the nucleus envelope and is required for kinetochore component proteostasis. Proper kinetochore stoichiometry ensures the correct attachment of kinetochores to spindle microtubules during cytokinesis. Required for the localization of spindle assembly checkpoint (SAC) protein mad2 and bub1 to the nucleus envelope during interphase, but not their localization during mitosis. The chain is Nucleoporin alm1 from Schizosaccharomyces pombe (strain 972 / ATCC 24843) (Fission yeast).